A 397-amino-acid polypeptide reads, in one-letter code: Homocitrate synthase AksA (397 aa).

Residues 19 to 270 (VIVYDTTLRD…DPGFNTEVLA (252 aa)) enclose the Pyruvate carboxyltransferase domain.

Belongs to the alpha-IPM synthase/homocitrate synthase family.

The enzyme catalyses acetyl-CoA + 2-oxoglutarate + H2O = (2R)-homocitrate + CoA + H(+). It carries out the reaction 2-oxoadipate + acetyl-CoA + H2O = (R)-dihomocitrate + CoA + H(+). The catalysed reaction is 2-oxoheptanedioate + acetyl-CoA + H2O = (R)-trihomocitrate + CoA + H(+). It functions in the pathway organic acid metabolism; 2-oxosuberate biosynthesis. Catalyzes the condensation of alpha-ketoglutarate and acetyl-CoA to form (R)-homocitrate. Can also catalyze the condensation of alpha-ketoadipate with acetyl-CoA to form (R)-homo(2)citrate, and the condensation of alpha-ketopimelate with acetyl-CoA to form (R)-homo(3)citrate. These reactions are part of the biosynthesis pathway of coenzyme B and biotin. The protein is Homocitrate synthase AksA (aksA) of Methanopyrus kandleri (strain AV19 / DSM 6324 / JCM 9639 / NBRC 100938).